A 201-amino-acid chain; its full sequence is Pyridoxal 5'-phosphate synthase subunit PdxT (201 aa).

An L-glutamine-binding site is contributed by 50 to 52; that stretch reads GES. Cys82 (nucleophile) is an active-site residue. Residues Arg115 and 143-144 each bind L-glutamine; that span reads IR. Active-site charge relay system residues include His179 and Glu181.

This sequence belongs to the glutaminase PdxT/SNO family. As to quaternary structure, in the presence of PdxS, forms a dodecamer of heterodimers. Only shows activity in the heterodimer.

It carries out the reaction aldehydo-D-ribose 5-phosphate + D-glyceraldehyde 3-phosphate + L-glutamine = pyridoxal 5'-phosphate + L-glutamate + phosphate + 3 H2O + H(+). The enzyme catalyses L-glutamine + H2O = L-glutamate + NH4(+). It participates in cofactor biosynthesis; pyridoxal 5'-phosphate biosynthesis. Its function is as follows. Catalyzes the hydrolysis of glutamine to glutamate and ammonia as part of the biosynthesis of pyridoxal 5'-phosphate. The resulting ammonia molecule is channeled to the active site of PdxS. This chain is Pyridoxal 5'-phosphate synthase subunit PdxT, found in Deinococcus geothermalis (strain DSM 11300 / CIP 105573 / AG-3a).